A 1550-amino-acid chain; its full sequence is MGARNSVLRGKKADELEKVRLRPGGKKKYRLKHIVWAANELDKFGLAESLLESKEGCQKILRVLDPLVPTGSENLKSLFNTVCVIWCLHAEEKVKDTEEAKKLAQRHLVAETGTAEKMPNTSRPTAPPSGKRGNYPVQQAGGNYVHVPLSPRTLNAWVKLVEEKKFGAEVVPGFQALSEGCTPYDINQMLNCVGDHQAAMQIIREIINEEAADWDSQHPIPGPLPAGQLRDPRGSDIAGTTSTVDEQIQWMYRPQNPVPVGNIYRRWIQIGLQKCVRKYNPTNILDIKQGPKEPFQSYVDRFYKSLRAEQTDPAVKNWMTQTLLIQNANPDCKLVLKGLGMNPTLEEMLTACQGVGGPGQKARLMAEALKEAMGPSPIPFAAAQQRKAIRYWNCGKEGHSARQCRAPRRQGCWKCGKPGHIMANCPERQAGFFRVGPTGKEASQLPRDPSPSGADTNSTSGRSSSGTVGEIYAAREKAEGAEGETIQRGDGGLAAPRAERDTSQRGDRGLAAPQFSLWKRPVVTAYIEDQPVEVLLDTGADDSIVAGIELGDNYTPKIVGGIGGFINTKEYKNVEIKVLNKRVRATIMTGDTPINIFGRNILTALGMSLNLPVAKIEPIKVTLKPGKDGPRLKQWPLTKEKIEALKEICEKMEKEGQLEEAPPTNPYNTPTFAIKKKDKNKWRMLIDFRELNKVTQDFTEIQLGIPHPAGLAKKKRISILDVGDAYFSIPLHEDFRQYTAFTLPAVNNMEPGKRYIYKVLPQGWKGSPAIFQYTMRQVLEPFRKANPDVILIQYMDDILIASDRTGLEHDKVVLQLKELLNGLGFSTPDEKFQKDPPFQWMGCELWPTKWKLQKLQLPQKDIWTVNDIQKLVGVLNWAAQIYSGIKTKHLCRLIRGKMTLTEEVQWTELAEAELEENKIILSQEQEGYYYQEEKELEATIQKSQGHQWTYKIHQEEKILKVGKYAKIKNTHTNGVRLLAQVVQKIGKEALVIWGRIPKFHLPVERETWEQWWDNYWQVTWIPEWDFVSTPPLVRLTFNLVGDPIPGAETFYTDGSCNRQSKEGKAGYVTDRGKDKVKVLEQTTNQQAELEVFRMALADSGPKVNIIVDSQYVMGIVAGQPTESENRIVNQIIEEMIKKEAVYVAWVPAHKGIGGNQEVDHLVSQGIRQVLFLEKIEPAQEEHEKYHSIIKELTHKFGIPLLVARQIVNSCAQCQQKGEAIHGQVNAEIGVWQMDYTHLEGKIIIVAVHVASGFIEAEVIPQESGRQTALFLLKLASRWPITHLHTDNGPNFTSQEVKMVAWWVGIEQSFGVPYNPQSQGVVEAMNHHLKNQISRIREQANTIETIVLMAVHCMNFKRRGGIGDMTPAERLINMITTEQEIQFLQRKNSNFKNFQVYYREGRDQLWKGPGELLWKGEGAVIVKVGTDIKVVPRRKAKIIRDYGGRQELDSSPHLEGAREDGEMACPCQVPEIQNKRPRGGALCSPPQGGMGMVDLQQGNIPTTRKKSSRNTGILEPNTRKRMALLSCSKINLVYRKVLDRCYPRLCRHPNT.

G2 carries the N-myristoyl glycine; by host lipid modification. Residues 7-31 (VLRGKKADELEKVRLRPGGKKKYRL) are interaction with Gp41. The Nuclear export signal motif lies at 16–22 (LEKVRLR). The short motif at 26 to 32 (KKKYRLK) is the Nuclear localization signal element. A disordered region spans residues 110–136 (AETGTAEKMPNTSRPTAPPSGKRGNYP). At Y135 the chain carries Phosphotyrosine; by host. The tract at residues 191–228 (NCVGDHQAAMQIIREIINEEAADWDSQHPIPGPLPAGQ) is interaction with human PPIA/CYPA and NUP153. The dimerization/Multimerization of capsid protein p24 stretch occupies residues 279 to 365 (YNPTNILDIK…GGPGQKARLM (87 aa)). 2 consecutive CCHC-type zinc fingers follow at residues 389–406 (IRYWNCGKEGHSARQCRA) and 410–427 (QGCWKCGKPGHIMANCPE). The interval 437–508 (PTGKEASQLP…ERDTSQRGDR (72 aa)) is disordered. A compositionally biased stretch (low complexity) spans 456-469 (TNSTSGRSSSGTVG). The span at 497–508 (RAERDTSQRGDR) shows a compositional bias: basic and acidic residues. The interval 513-517 (PQFSL) is dimerization of protease. A Peptidase A2 domain is found at 532–601 (VEVLLDTGAD…TPINIFGRNI (70 aa)). D537 functions as the For protease activity; shared with dimeric partner in the catalytic mechanism. 2 dimerization of protease regions span residues 561-567 (GIGGFIN) and 600-612 (NILTALGMSLNLP). Positions 655-845 (EGQLEEAPPT…PPFQWMGCEL (191 aa)) constitute a Reverse transcriptase domain. Positions 721, 796, and 797 each coordinate Mg(2+). Residues 838 to 846 (FQWMGCELW) form an RT 'primer grip' region. The Tryptophan repeat motif motif lies at 1008–1024 (WEQWWDNYWQVTWIPEW). The 124-residue stretch at 1044–1167 (IPGAETFYTD…VDHLVSQGIR (124 aa)) folds into the RNase H type-1 domain. D1053, E1088, D1108, and D1159 together coordinate Mg(2+). The segment at 1173–1214 (EKIEPAQEEHEKYHSIIKELTHKFGIPLLVARQIVNSCAQCQ) adopts an Integrase-type zinc-finger fold. Zn(2+)-binding residues include H1182, H1186, C1210, and C1213. The region spanning 1223-1374 (QVNAEIGVWQ…TPAERLINMI (152 aa)) is the Integrase catalytic domain. Mg(2+) is bound by residues D1234, D1286, and E1322. A DNA-binding region (integrase-type) is located at residues 1393–1440 (FQVYYREGRDQLWKGPGELLWKGEGAVIVKVGTDIKVVPRRKAKIIRD).

Homotrimer; further assembles as hexamers of trimers. Interacts with gp41 (via C-terminus). Interacts with host CALM1; this interaction induces a conformational change in the Matrix protein, triggering exposure of the myristate group. Interacts with host AP3D1; this interaction allows the polyprotein trafficking to multivesicular bodies during virus assembly. Part of the pre-integration complex (PIC) which is composed of viral genome, matrix protein, Vpr and integrase. As to quaternary structure, homodimer; the homodimer further multimerizes as homohexamers or homopentamers. Interacts with human PPIA/CYPA. Interacts with human NUP153. Interacts with host PDZD8; this interaction stabilizes the capsid. Interacts with monkey TRIM5; this interaction destabilizes the capsid. In terms of assembly, homodimer, whose active site consists of two apposed aspartic acid residues. Heterodimer of p66 RT and p51 RT (RT p66/p51). Heterodimerization of RT is essential for DNA polymerase activity. The overall folding of the subdomains is similar in p66 RT and p51 RT but the spatial arrangements of the subdomains are dramatically different. As to quaternary structure, homotetramer; may further associate as a homohexadecamer. Part of the pre-integration complex (PIC) which is composed of viral genome, matrix protein, Vpr and integrase. Interacts with human SMARCB1/INI1 and human PSIP1/LEDGF isoform 1. Interacts with human KPNA3; this interaction might play a role in nuclear import of the pre-integration complex. Interacts with human NUP153; this interaction might play a role in nuclear import of the pre-integration complex. Mg(2+) is required as a cofactor. Post-translationally, specific enzymatic cleavages by the viral protease yield mature proteins. The protease is released by autocatalytic cleavage. The polyprotein is cleaved during and after budding, this process is termed maturation. Proteolytic cleavage of p66 RT removes the RNase H domain to yield the p51 RT subunit. Nucleocapsid protein p7 might be further cleaved after virus entry.

The protein resides in the host cell membrane. It localises to the host endosome. It is found in the host multivesicular body. Its subcellular location is the virion membrane. The protein localises to the host nucleus. The protein resides in the host cytoplasm. It localises to the virion. It carries out the reaction Endopeptidase for which the P1 residue is preferably hydrophobic.. The enzyme catalyses Endohydrolysis of RNA in RNA/DNA hybrids. Three different cleavage modes: 1. sequence-specific internal cleavage of RNA. Human immunodeficiency virus type 1 and Moloney murine leukemia virus enzymes prefer to cleave the RNA strand one nucleotide away from the RNA-DNA junction. 2. RNA 5'-end directed cleavage 13-19 nucleotides from the RNA end. 3. DNA 3'-end directed cleavage 15-20 nucleotides away from the primer terminus.. It catalyses the reaction 3'-end directed exonucleolytic cleavage of viral RNA-DNA hybrid.. The catalysed reaction is DNA(n) + a 2'-deoxyribonucleoside 5'-triphosphate = DNA(n+1) + diphosphate. With respect to regulation, protease: The viral protease is inhibited by many synthetic protease inhibitors (PIs), such as amprenavir, atazanavir, indinavir, loprinavir, nelfinavir, ritonavir and saquinavir. Use of protease inhibitors in tritherapy regimens permit more ambitious therapeutic strategies. Reverse transcriptase/ribonuclease H: RT can be inhibited either by nucleoside RT inhibitors (NRTIs) or by non nucleoside RT inhibitors (NNRTIs). NRTIs act as chain terminators, whereas NNRTIs inhibit DNA polymerization by binding a small hydrophobic pocket near the RT active site and inducing an allosteric change in this region. Classical NRTIs are abacavir, adefovir (PMEA), didanosine (ddI), lamivudine (3TC), stavudine (d4T), tenofovir (PMPA), zalcitabine (ddC), and zidovudine (AZT). Classical NNRTIs are atevirdine (BHAP U-87201E), delavirdine, efavirenz (DMP-266), emivirine (I-EBU), and nevirapine (BI-RG-587). The tritherapies used as a basic effective treatment of AIDS associate two NRTIs and one NNRTI. In terms of biological role, mediates, with Gag polyprotein, the essential events in virion assembly, including binding the plasma membrane, making the protein-protein interactions necessary to create spherical particles, recruiting the viral Env proteins, and packaging the genomic RNA via direct interactions with the RNA packaging sequence (Psi). Gag-Pol polyprotein may regulate its own translation, by the binding genomic RNA in the 5'-UTR. At low concentration, the polyprotein would promote translation, whereas at high concentration, the polyprotein would encapsidate genomic RNA and then shut off translation. Targets the polyprotein to the plasma membrane via a multipartite membrane-binding signal, that includes its myristoylated N-terminus. Matrix protein is part of the pre-integration complex. Implicated in the release from host cell mediated by Vpu. Binds to RNA. Its function is as follows. Forms the conical core that encapsulates the genomic RNA-nucleocapsid complex in the virion. Most core are conical, with only 7% tubular. The core is constituted by capsid protein hexamer subunits. The core is disassembled soon after virion entry. Host restriction factors such as TRIM5-alpha or TRIMCyp bind retroviral capsids and cause premature capsid disassembly, leading to blocks in reverse transcription. Capsid restriction by TRIM5 is one of the factors which restricts HIV-1 to the human species. Host PIN1 apparently facilitates the virion uncoating. On the other hand, interactions with PDZD8 or CYPA stabilize the capsid. Functionally, encapsulates and protects viral dimeric unspliced genomic RNA (gRNA). Binds these RNAs through its zinc fingers. Acts as a nucleic acid chaperone which is involved in rearangement of nucleic acid secondary structure during gRNA retrotranscription. Also facilitates template switch leading to recombination. As part of the polyprotein, participates in gRNA dimerization, packaging, tRNA incorporation and virion assembly. In terms of biological role, aspartyl protease that mediates proteolytic cleavages of Gag and Gag-Pol polyproteins during or shortly after the release of the virion from the plasma membrane. Cleavages take place as an ordered, step-wise cascade to yield mature proteins. This process is called maturation. Displays maximal activity during the budding process just prior to particle release from the cell. Also cleaves Nef and Vif, probably concomitantly with viral structural proteins on maturation of virus particles. Hydrolyzes host EIF4GI and PABP1 in order to shut off the capped cellular mRNA translation. The resulting inhibition of cellular protein synthesis serves to ensure maximal viral gene expression and to evade host immune response. Multifunctional enzyme that converts the viral RNA genome into dsDNA in the cytoplasm, shortly after virus entry into the cell. This enzyme displays a DNA polymerase activity that can copy either DNA or RNA templates, and a ribonuclease H (RNase H) activity that cleaves the RNA strand of RNA-DNA heteroduplexes in a partially processive 3' to 5' endonucleasic mode. Conversion of viral genomic RNA into dsDNA requires many steps. A tRNA(3)-Lys binds to the primer-binding site (PBS) situated at the 5'-end of the viral RNA. RT uses the 3' end of the tRNA primer to perform a short round of RNA-dependent minus-strand DNA synthesis. The reading proceeds through the U5 region and ends after the repeated (R) region which is present at both ends of viral RNA. The portion of the RNA-DNA heteroduplex is digested by the RNase H, resulting in a ssDNA product attached to the tRNA primer. This ssDNA/tRNA hybridizes with the identical R region situated at the 3' end of viral RNA. This template exchange, known as minus-strand DNA strong stop transfer, can be either intra- or intermolecular. RT uses the 3' end of this newly synthesized short ssDNA to perform the RNA-dependent minus-strand DNA synthesis of the whole template. RNase H digests the RNA template except for two polypurine tracts (PPTs) situated at the 5'-end and near the center of the genome. It is not clear if both polymerase and RNase H activities are simultaneous. RNase H probably can proceed both in a polymerase-dependent (RNA cut into small fragments by the same RT performing DNA synthesis) and a polymerase-independent mode (cleavage of remaining RNA fragments by free RTs). Secondly, RT performs DNA-directed plus-strand DNA synthesis using the PPTs that have not been removed by RNase H as primers. PPTs and tRNA primers are then removed by RNase H. The 3' and 5' ssDNA PBS regions hybridize to form a circular dsDNA intermediate. Strand displacement synthesis by RT to the PBS and PPT ends produces a blunt ended, linear dsDNA copy of the viral genome that includes long terminal repeats (LTRs) at both ends. Its function is as follows. Catalyzes viral DNA integration into the host chromosome, by performing a series of DNA cutting and joining reactions. This enzyme activity takes place after virion entry into a cell and reverse transcription of the RNA genome in dsDNA. The first step in the integration process is 3' processing. This step requires a complex comprising the viral genome, matrix protein, Vpr and integrase. This complex is called the pre-integration complex (PIC). The integrase protein removes 2 nucleotides from each 3' end of the viral DNA, leaving recessed CA OH's at the 3' ends. In the second step, the PIC enters cell nucleus. This process is mediated through integrase and Vpr proteins, and allows the virus to infect a non dividing cell. This ability to enter the nucleus is specific of lentiviruses, other retroviruses cannot and rely on cell division to access cell chromosomes. In the third step, termed strand transfer, the integrase protein joins the previously processed 3' ends to the 5' ends of strands of target cellular DNA at the site of integration. The 5'-ends are produced by integrase-catalyzed staggered cuts, 5 bp apart. A Y-shaped, gapped, recombination intermediate results, with the 5'-ends of the viral DNA strands and the 3' ends of target DNA strands remaining unjoined, flanking a gap of 5 bp. The last step is viral DNA integration into host chromosome. This involves host DNA repair synthesis in which the 5 bp gaps between the unjoined strands are filled in and then ligated. Since this process occurs at both cuts flanking the HIV genome, a 5 bp duplication of host DNA is produced at the ends of HIV-1 integration. Alternatively, Integrase may catalyze the excision of viral DNA just after strand transfer, this is termed disintegration. This is Gag-Pol polyprotein (gag-pol) from Homo sapiens (Human).